Here is a 64-residue protein sequence, read N- to C-terminus: Beta-defensin 1 (64 aa).

The N-terminal stretch at 1-20 is a signal peptide; sequence MRLHRLLLVFLLMVLLPVPG. The propeptide occupies 21–23; it reads LLK. 3 disulfides stabilise this stretch: Cys-31-Cys-60, Cys-38-Cys-53, and Cys-43-Cys-61.

Belongs to the beta-defensin family. As to quaternary structure, monomer. Homodimer.

It localises to the secreted. The protein localises to the membrane. In terms of biological role, has bactericidal activity. May act as a ligand for C-C chemokine receptor CCR6. Positively regulates the sperm motility and bactericidal activity in a CCR6-dependent manner. Binds to CCR6 and triggers Ca2+ mobilization in the sperm which is important for its motility. In Sus scrofa (Pig), this protein is Beta-defensin 1 (DEFB1).